Here is a 616-residue protein sequence, read N- to C-terminus: tRNA 5-methylaminomethyl-2-thiouridine biosynthesis bifunctional protein MnmC (616 aa).

The tRNA (mnm(5)s(2)U34)-methyltransferase stretch occupies residues 1–232; that stretch reads MLRTIVPARL…KRHCMSARFA (232 aa). The tract at residues 249–616 is FAD-dependent cmnm(5)s(2)U34 oxidoreductase; that stretch reads IGGGVAGAAA…ARFAGNRKTA (368 aa).

This sequence in the N-terminal section; belongs to the methyltransferase superfamily. tRNA (mnm(5)s(2)U34)-methyltransferase family. In the C-terminal section; belongs to the DAO family. The cofactor is FAD.

It is found in the cytoplasm. It catalyses the reaction 5-aminomethyl-2-thiouridine(34) in tRNA + S-adenosyl-L-methionine = 5-methylaminomethyl-2-thiouridine(34) in tRNA + S-adenosyl-L-homocysteine + H(+). Functionally, catalyzes the last two steps in the biosynthesis of 5-methylaminomethyl-2-thiouridine (mnm(5)s(2)U) at the wobble position (U34) in tRNA. Catalyzes the FAD-dependent demodification of cmnm(5)s(2)U34 to nm(5)s(2)U34, followed by the transfer of a methyl group from S-adenosyl-L-methionine to nm(5)s(2)U34, to form mnm(5)s(2)U34. The polypeptide is tRNA 5-methylaminomethyl-2-thiouridine biosynthesis bifunctional protein MnmC (Thiobacillus denitrificans (strain ATCC 25259 / T1)).